Consider the following 343-residue polypeptide: Glyceraldehyde-3-phosphate dehydrogenase (343 aa).

NAD(+) is bound by residues 13-14 and G111; that span reads TI. 140–142 is a binding site for D-glyceraldehyde 3-phosphate; sequence SCN. Catalysis depends on C141, which acts as the Nucleophile. R169 is an NAD(+) binding site. D-glyceraldehyde 3-phosphate is bound at residue 195–196; the sequence is HA. Q303 is an NAD(+) binding site.

Belongs to the glyceraldehyde-3-phosphate dehydrogenase family. In terms of assembly, homotetramer.

It is found in the cytoplasm. It carries out the reaction D-glyceraldehyde 3-phosphate + phosphate + NADP(+) = (2R)-3-phospho-glyceroyl phosphate + NADPH + H(+). The catalysed reaction is D-glyceraldehyde 3-phosphate + phosphate + NAD(+) = (2R)-3-phospho-glyceroyl phosphate + NADH + H(+). The protein operates within carbohydrate degradation; glycolysis; pyruvate from D-glyceraldehyde 3-phosphate: step 1/5. The chain is Glyceraldehyde-3-phosphate dehydrogenase from Sulfolobus acidocaldarius (strain ATCC 33909 / DSM 639 / JCM 8929 / NBRC 15157 / NCIMB 11770).